A 141-amino-acid chain; its full sequence is Transcriptional regulator MraZ (141 aa).

SpoVT-AbrB domains lie at 5-47 and 76-119; these read TFNI…KPQD and ANFV…DKKL.

It belongs to the MraZ family. In terms of assembly, homooctamer. Forms a ring.

It is found in the cytoplasm. The protein localises to the nucleoid. This Mycoplasma pneumoniae (strain ATCC 29342 / M129 / Subtype 1) (Mycoplasmoides pneumoniae) protein is Transcriptional regulator MraZ.